The sequence spans 339 residues: DNA repair protein RAD51 homolog 1 (339 aa).

The interval 1 to 22 (MAMQMQLEASADTSVEEESFGP) is disordered. Ala-2 is subject to N-acetylalanine. A Phosphothreonine modification is found at Thr-13. At Ser-14 the chain carries Phosphoserine. The HhH domain occupies 48–77 (TVEAVAYAPKKELINIKGISEAKADKILTE). A Phosphotyrosine; by ABL1 modification is found at Tyr-54. Residues Lys-58 and Lys-64 each participate in a glycyl lysine isopeptide (Lys-Gly) (interchain with G-Cter in ubiquitin) cross-link. 127-134 (GEFRTGKT) is a binding site for ATP. Positions 184–257 (DVLDNVAYAR…FLRMLLRLAD (74 aa)) are interaction with PALB2. The short motif at 245 to 260 (LARFLRMLLRLADEFG) is the Nuclear export signal; masked by the interaction with BRCA2 element. Phosphothreonine; by CHEK1 is present on Thr-309.

The protein belongs to the RecA family. RAD51 subfamily. Forms linear homooligomers, giving rise to a RAD51 nucleoprotein filament, which is essential for strand-pairing reactions during DNA recombination. Interacts with BRCA1 and either directly or indirectly with p53. Interacts with XRCC3, RAD54L and RAD54B. Interacts with the BCDX2 subcomplex RAD51C:RAD51B. Component of the homologous recombination repair (HR) complex composed of ERCC5/XPG, BRCA2, PALB2, DSS1 and RAD51. Interacts directly with PALB2 which may serve as a scaffold for a HR complex containing PALB2, BRCA2, RAD51C, RAD51 and XRCC3. Interacts with RAD51AP1 and RAD51AP2. Interacts with CHEK1, and this may require prior phosphorylation of CHEK1. Interacts with the MND1-PSMC3IP heterodimer. Found in a complex, at least composed of BLM, RAD51 and SPIDR; the complex formation is mediated by SPIDR. Interacts with SPIDR; the interaction is direct and recruits RAD51 to DNA damage sites. Interacts with FIGNL1 (via N-terminal one-half region); the interaction is direct. Interacts with RAD51AP1 (via C-terminal region); the interaction is direct. Interacts with NABP2, RPA1, PALB2 and RAD51. Interacts with SWI5/C9orf119, and at lower level with SFR1/MEIR5. Interacts with hyperphosphorylated RPA2; this interaction is necessary for efficient recruitment to chromatin in response to DNA damage. Interacts with SWSAP1; involved in homologous recombination repair. Interacts with PARPBP, BRCA2 and RECQL5; these interactions interfere with the formation of the RAD51-DNA homologous recombination structure. Interacts with POLQ; POLQ acts as an inhibitor of homology-recombination repair (HR) pathway by limiting RAD51 accumulation at resected ends. Interacts with POLN. Interacts with FBH1. Interacts with RFWD3. Interacts with the MCM8-MCM9 complex; the interaction recruits RAD51 to DNA damage sites. Component of a multiprotein complex with MEIOB and SPATA22. Interacts with the complex BRME1:HSF2BP:BRCA2. Interacts with HELQ; stimulating HELQ DNA helicase activity and ability to unwing DNA. Interacts with MMS22L; the interaction is direct and promotes recruitment of RAD51 to sites of DNA damage. Interacts with the ATAD5 RFC-like complex. Within the ATAD5 RFC-like complex, interacts with ATAD5 (via N-terminus); the interaction is direct and enhanced under replication stress. Interacts with WDR48; the interaction is enhanced under replication stress. Interacts with DNA helicase ZGRF1; the interaction promotes RAD51 strand exchange activity. Interacts (when phosphorylated) with TOPBP1; interaction takes place following phosphorylation by CK2 and PLK1 and promotes recruitment to DNA damage sites. Interacts with GRB2; this interaction inhibits RAD51 ATPase activity to stabilize RAD51 on stalled replication forks. Post-translationally, ubiquitinated by the SCF(FBH1) E3 ubiquitin ligase complex, regulating RAD51 subcellular location and preventing its association with DNA. Ubiquitinated by RFWD3 in response to DNA damage: ubiquitination leads to degradation by the proteasome, promoting homologous recombination. Phosphorylation of Thr-309 by CHEK1 may enhance association with chromatin at sites of DNA damage and promote DNA repair by homologous recombination. Phosphorylated at Ser-14 by PLK1, triggering phosphorylation at Thr-13 by CK2, thereby promoting interaction with TOPBP1 and recruitment to DNA damage sites during S-phase. Phosphorylation by ABL1 inhibits function. In terms of tissue distribution, expressed in the testes (at protein level). Expressed in the brain (at protein level). Expressed in the thymus, spleen, ovary and small intestine.

Its subcellular location is the nucleus. It localises to the cytoplasm. The protein localises to the perinuclear region. The protein resides in the mitochondrion matrix. It is found in the chromosome. Its subcellular location is the cytoskeleton. It localises to the microtubule organizing center. The protein localises to the centrosome. Functionally, plays an important role in homologous strand exchange, a key step in DNA repair through homologous recombination (HR). Binds to single-stranded DNA in an ATP-dependent manner to form nucleoprotein filaments which are essential for the homology search and strand exchange. Catalyzes the recognition of homology and strand exchange between homologous DNA partners to form a joint molecule between a processed DNA break and the repair template. Recruited to resolve stalled replication forks during replication stress. Part of a PALB2-scaffolded HR complex containing BRCA2 and RAD51C and which is thought to play a role in DNA repair by HR. Plays a role in regulating mitochondrial DNA copy number under conditions of oxidative stress in the presence of RAD51C and XRCC3. Also involved in interstrand cross-link repair. The chain is DNA repair protein RAD51 homolog 1 from Mus musculus (Mouse).